The sequence spans 355 residues: MEAKNKKAVASRLCCLCNLRRPVLKRPKTLQQICRECFYEVFEEEIHQVIVQNRLFKSGERVAIGASGGKDSTVLAYVLSELNRRHNYGLDLFLLSIDEGITGYRDDSLETVKRNEVQYGLPLKIVSYKDLYGWTMDEIVKMIGLKNNCTFCGVFRRQALDRGAALLKVEKLVTGHNADDIAETVLLNILRGDIARLSRCTSITTGEDGPIPRCKPFKYTYEKEIVMYAYFKKLDYFSTECIYSPNAYRGFAREFIKDLERIRPRAILDIIKSGEDFRIATTTKMPEQGTCERCGYISSQKWCKACVLLEGLNRGLPKMGIGRPRGVNGDHNKETKKPGSVAKSIESKQCGSLDF.

A disordered region spans residues G320–V341. Positions N328 to K337 are enriched in basic and acidic residues.

This sequence belongs to the TtcA family. CTU1/NCS6/ATPBD3 subfamily.

The protein localises to the cytoplasm. It functions in the pathway tRNA modification; 5-methoxycarbonylmethyl-2-thiouridine-tRNA biosynthesis. In terms of biological role, plays a central role in 2-thiolation of mcm(5)S(2)U at tRNA wobble positions of tRNA(Lys), tRNA(Glu) and tRNA(Gln). Directly binds tRNAs and probably acts by catalyzing adenylation of tRNAs, an intermediate required for 2-thiolation. It is unclear whether it acts as a sulfurtransferase that transfers sulfur from thiocarboxylated URM1 onto the uridine of tRNAs at wobble position. The polypeptide is Cytoplasmic tRNA 2-thiolation protein 1 (Arabidopsis thaliana (Mouse-ear cress)).